A 261-amino-acid polypeptide reads, in one-letter code: 4-hydroxy-tetrahydrodipicolinate reductase (261 aa).

An NAD(+)-binding site is contributed by 9–14 (GCLGRM). Arg36 contacts NADP(+). Residues 97-99 (GTT) and 118-121 (SANM) each bind NAD(+). The Proton donor/acceptor role is filled by His151. His152 serves as a coordination point for (S)-2,3,4,5-tetrahydrodipicolinate. The active-site Proton donor is the Lys155. A (S)-2,3,4,5-tetrahydrodipicolinate-binding site is contributed by 161 to 162 (GT).

It belongs to the DapB family.

It localises to the cytoplasm. It catalyses the reaction (S)-2,3,4,5-tetrahydrodipicolinate + NAD(+) + H2O = (2S,4S)-4-hydroxy-2,3,4,5-tetrahydrodipicolinate + NADH + H(+). The enzyme catalyses (S)-2,3,4,5-tetrahydrodipicolinate + NADP(+) + H2O = (2S,4S)-4-hydroxy-2,3,4,5-tetrahydrodipicolinate + NADPH + H(+). Its pathway is amino-acid biosynthesis; L-lysine biosynthesis via DAP pathway; (S)-tetrahydrodipicolinate from L-aspartate: step 4/4. Its function is as follows. Catalyzes the conversion of 4-hydroxy-tetrahydrodipicolinate (HTPA) to tetrahydrodipicolinate. This chain is 4-hydroxy-tetrahydrodipicolinate reductase, found in Wolbachia pipientis wMel.